The primary structure comprises 371 residues: Queuine tRNA-ribosyltransferase (371 aa).

The Proton acceptor role is filled by aspartate 90. Residues 90-94 (DSGGF), aspartate 144, glutamine 188, and glycine 215 each bind substrate. The tract at residues 246 to 252 (GVGTPED) is RNA binding. Aspartate 265 (nucleophile) is an active-site residue. Residues 270–274 (TRNAR) are RNA binding; important for wobble base 34 recognition. Zn(2+) contacts are provided by cysteine 303, cysteine 305, cysteine 308, and histidine 334.

It belongs to the queuine tRNA-ribosyltransferase family. As to quaternary structure, homodimer. Within each dimer, one monomer is responsible for RNA recognition and catalysis, while the other monomer binds to the replacement base PreQ1. Requires Zn(2+) as cofactor.

It catalyses the reaction 7-aminomethyl-7-carbaguanine + guanosine(34) in tRNA = 7-aminomethyl-7-carbaguanosine(34) in tRNA + guanine. It functions in the pathway tRNA modification; tRNA-queuosine biosynthesis. Its function is as follows. Catalyzes the base-exchange of a guanine (G) residue with the queuine precursor 7-aminomethyl-7-deazaguanine (PreQ1) at position 34 (anticodon wobble position) in tRNAs with GU(N) anticodons (tRNA-Asp, -Asn, -His and -Tyr). Catalysis occurs through a double-displacement mechanism. The nucleophile active site attacks the C1' of nucleotide 34 to detach the guanine base from the RNA, forming a covalent enzyme-RNA intermediate. The proton acceptor active site deprotonates the incoming PreQ1, allowing a nucleophilic attack on the C1' of the ribose to form the product. After dissociation, two additional enzymatic reactions on the tRNA convert PreQ1 to queuine (Q), resulting in the hypermodified nucleoside queuosine (7-(((4,5-cis-dihydroxy-2-cyclopenten-1-yl)amino)methyl)-7-deazaguanosine). The protein is Queuine tRNA-ribosyltransferase of Neisseria gonorrhoeae (strain NCCP11945).